The following is a 233-amino-acid chain: MPKHGKRYRALIEKVDRNKQYTIDEAAALVKELATAKFDETVEVHFRLGIDPRKSDQNVRGTVALPHGTGRTVRVAVITKGENVAAAEAAGADVVGSDELIERIAGGFMEFDAVVATPDMMAAVGQKLARLLGPRGLLPNPKSGTVGPDVTGMVRGLKAGRIEFRNDKTGVVHAPIGKASFDPSNLSANYGALISALEAAKPGTAKGVFLRSAYMTTTMGPSIPLTLSGGAQA.

It belongs to the universal ribosomal protein uL1 family. As to quaternary structure, part of the 50S ribosomal subunit.

Binds directly to 23S rRNA. The L1 stalk is quite mobile in the ribosome, and is involved in E site tRNA release. Its function is as follows. Protein L1 is also a translational repressor protein, it controls the translation of the L11 operon by binding to its mRNA. In Deinococcus deserti (strain DSM 17065 / CIP 109153 / LMG 22923 / VCD115), this protein is Large ribosomal subunit protein uL1.